Here is a 163-residue protein sequence, read N- to C-terminus: Type-2 ice-structuring protein (163 aa).

The N-terminal stretch at 1-17 is a signal peptide; it reads MLTVSLLVCAMMALTQA. The propeptide occupies 18 to 34; the sequence is NDDKILKGTATEAGPVS. Residues 39 to 163 form the C-type lectin domain; the sequence is PNCPAGWQPL…SHKSVCAMTF (125 aa). Cystine bridges form between Cys-41–Cys-52, Cys-69–Cys-159, Cys-103–Cys-134, Cys-123–Cys-145, and Cys-135–Cys-151.

Post-translationally, the N-terminus is blocked.

It is found in the secreted. Functionally, antifreeze proteins lower the blood freezing point. This Hemitripterus americanus (Sea raven) protein is Type-2 ice-structuring protein.